Consider the following 242-residue polypeptide: ATP synthase subunit a (242 aa).

A run of 7 helical transmembrane segments spans residues 23 to 43, 62 to 82, 84 to 104, 113 to 133, 143 to 163, 176 to 196, and 201 to 221; these read ISFTNCALFMILASLVSAVLL, VELIYNFVVGAIESNAGVGGL, YIPFVLSIFLFVLACNIIGIL, HVSVTLALSVVVCASVTVLGF, IFLPEGTPLWLAPMMVFIKLF, LAANMIAGHTIIAVIAEFVLK, and LAPLPFAFIMVLIAFEIFVAI.

This sequence belongs to the ATPase A chain family. F-type ATPases have 2 components, CF(1) - the catalytic core - and CF(0) - the membrane proton channel. CF(1) has five subunits: alpha(3), beta(3), gamma(1), delta(1), epsilon(1). CF(0) has three main subunits: a(1), b(2) and c(9-12). The alpha and beta chains form an alternating ring which encloses part of the gamma chain. CF(1) is attached to CF(0) by a central stalk formed by the gamma and epsilon chains, while a peripheral stalk is formed by the delta and b chains.

It localises to the cell inner membrane. Functionally, key component of the proton channel; it plays a direct role in the translocation of protons across the membrane. In Anaplasma phagocytophilum (strain HZ), this protein is ATP synthase subunit a.